Reading from the N-terminus, the 378-residue chain is Stimulator of interferon genes protein (378 aa).

Transmembrane regions (helical) follow at residues 21–41 (AAFV…EPAD) and 46–66 (WLVL…LCSL). S-palmitoyl cysteine attachment occurs at residues cysteine 88 and cysteine 91. The next 2 membrane-spanning stretches (helical) occupy residues 89–109 (LGCP…YTFL) and 114–134 (GLPF…NILL). The tract at residues 153 to 339 (FNVAHGLAWS…KHLKQEEKEE (187 aa)) is cyclic dinucleotide-binding domain (CBD). Residues serine 162, tyrosine 167, arginine 238, and threonine 263 each coordinate 2',3'-cGAMP. 3',3'-c-di-GMP-binding positions include serine 162, tyrosine 167, 238 to 241 (RVYT), and threonine 263. The 2',3'-cUAMP site is built by tyrosine 167, arginine 238, and threonine 263. The interval 339–378 (EVTVGTMGSSGVLESSTLDKEPQLLISGMDQPLPLRTDVF) is C-terminal tail (CTT). Position 354 is a phosphoserine (serine 354). Threonine 355 carries the post-translational modification Phosphothreonine. The pLxIS motif signature appears at 362–365 (LLIS). Residue serine 365 is modified to Phosphoserine; by TBK1.

This sequence belongs to the STING family. Homodimer; forms a homodimer in absence of cyclic nucleotide (c-di-GMP or cGAMP). Homotetramer; in presence of cyclic nucleotide (c-di-GMP or cGAMP), forms tetramers and higher-order oligomers through side-by-side packing. Interacts (when phosphorylated) with IRF3; following activation and phosphorylation on the pLxIS motif by TBK1, recruits IRF3. Interacts with TBK1; when homodimer, leading to subsequent production of IFN-beta. In terms of processing, phosphorylation by TBK1 leads to activation and production of IFN-beta. Following cyclic nucleotide (c-di-GMP or cGAMP)-binding, activation and translocation from the endoplasmic reticulum, STING1 is phosphorylated by TBK1 at Ser-365 in the pLxIS motif. The phosphorylated pLxIS motif constitutes an IRF3-binding motif, leading to recruitment of the transcription factor IRF3 to induce type-I interferons and other cytokines. In contrast, lacks phosphorylation site at position 357, leading to reduced production of type-I interferons and other cytokines.

The protein resides in the endoplasmic reticulum membrane. Its subcellular location is the cytoplasm. It is found in the perinuclear region. It localises to the endoplasmic reticulum-Golgi intermediate compartment membrane. The protein localises to the golgi apparatus membrane. The protein resides in the cytoplasmic vesicle. Its subcellular location is the autophagosome membrane. It is found in the mitochondrion outer membrane. It localises to the cell membrane. It catalyses the reaction H(+)(in) = H(+)(out). In terms of biological role, facilitator of innate immune signaling that acts as a sensor of cytosolic DNA from bacteria and viruses and promotes low production of type I interferon (IFN-alpha and IFN-beta). Compared to other mammals, STING1-dependent type I interferon induction is strongly reduced in bats, suggesting that the cGAS-STING pathway promotes a limited inflammatory response. Innate immune response is triggered in response to non-CpG double-stranded DNA from viruses and bacteria delivered to the cytoplasm. Acts by binding cyclic dinucleotides: recognizes and binds cyclic di-GMP (c-di-GMP), a second messenger produced by bacteria, cyclic UMP-AMP (2',3'-cUAMP), and cyclic GMP-AMP (cGAMP), a messenger produced by CGAS in response to DNA virus in the cytosol. Upon binding to c-di-GMP, cUAMP or cGAMP, STING1 oligomerizes, translocates from the endoplasmic reticulum and is phosphorylated by TBK1 on the pLxIS motif, leading to recruitment and subsequent activation of the transcription factor IRF3 to induce expression of type I interferon and exert a potent anti-viral state. In addition to promote the production of type I interferons, plays a direct role in autophagy. Following cGAMP-binding, STING1 buds from the endoplasmic reticulum into COPII vesicles, which then form the endoplasmic reticulum-Golgi intermediate compartment (ERGIC). The ERGIC serves as the membrane source for WIPI2 recruitment and LC3 lipidation, leading to formation of autophagosomes that target cytosolic DNA or DNA viruses for degradation by the lysosome. Promotes autophagy by acting as a proton channel that directs proton efflux from the Golgi to facilitate MAP1LC3B/LC3B lipidation. The autophagy- and interferon-inducing activities can be uncoupled and autophagy induction is independent of TBK1 phosphorylation. The chain is Stimulator of interferon genes protein from Rhinolophus ferrumequinum (Greater horseshoe bat).